The following is a 315-amino-acid chain: Petrobactin import system permease protein YclO (315 aa).

A run of 9 helical transmembrane segments spans residues 7–27, 40–60, 76–96, 100–120, 128–148, 172–192, 223–243, 262–282, and 288–308; these read IALL…YDLG, VAAI…FQTI, LYML…MVIM, INFI…YQIM, IFFL…LSSF, INTD…VYVW, LIVV…IMFL, YLIA…QFVV, and FSTT…IYLL.

Belongs to the binding-protein-dependent transport system permease family. FecCD subfamily. As to quaternary structure, the complex is composed of two ATP-binding proteins (YclP), two transmembrane proteins (YclN and YclO) and a solute-binding protein (YclQ).

It localises to the cell membrane. Its function is as follows. Part of the ABC transporter complex YclNOPQ involved in uptake of ferric-petrobactin. Petrobactin is a photoreactive 3,4-catecholate siderophore produced by many members of the B.cereus group, including B.anthracis. Probably responsible for the translocation of the substrate across the membrane. This chain is Petrobactin import system permease protein YclO (yclO), found in Bacillus subtilis (strain 168).